The following is a 345-amino-acid chain: MAEFWASPYGFALSMLLQGLAVIAFVMGSLIFMVYGDRKIWAAVQMRRGPNVVGPWGLLQTFADALKYIVKEIVIPAGADKFVYFLAPFLSMMLALFAFVVIPFDEGWVMANINVGILFIFAASSLEVYGVIMGGWASNSKYPFLASLRSAAQMISYEVSLGLIIIGIIISTGSMNLTAIVEAQRGDYGLLNWYWLPHLPMVVLFFVSALAECNRPPFDLVEAESELVAGFMTEYSSTPYLLFMAGEYIAMYLMCALLSLLFFGGWLSPVPFIADGWWWMVIKMWFWFYMFAMVKAIVPRYRYDQLMRIGWKVFLPLSLGWVVLVAILARYEILGGFWARFAVGG.

8 helical membrane-spanning segments follow: residues 15-35 (MLLQ…FMVY), 82-102 (FVYF…FVVI), 115-135 (VGIL…IMGG), 161-181 (LGLI…TAIV), 190-210 (LLNW…VSAL), 240-262 (YLLF…SLLF), 278-298 (WWMV…KAIV), and 309-329 (IGWK…AILA).

This sequence belongs to the complex I subunit 1 family. NDH-1 is composed of at least 14 different subunits, Nqo1 to Nqo14. The complex has a L-shaped structure, with the hydrophobic arm (subunits Nqo7, Nqo8, Nqo10 to Nqo14) embedded in the inner membrane and the hydrophilic peripheral arm (subunits Nqo1 to Nqo6, Nqo9) protruding into the bacterial cytoplasm. The hydrophilic domain contains all the redox centers. NADH-quinone oxidoreductase forms a supercomplex with ubiquinol-cytochrome c reductase complex (complex III or cytochrome b-c1 complex) and cytochrome c oxidase (complex IV), which stabilizes the NADH-quinone oxidoreductase complex.

The protein localises to the cell inner membrane. It catalyses the reaction a quinone + NADH + 5 H(+)(in) = a quinol + NAD(+) + 4 H(+)(out). NDH-1 shuttles electrons from NADH, via FMN and iron-sulfur (Fe-S) centers, to quinones in the respiratory chain. The immediate electron acceptor for the enzyme in this species is believed to be ubiquinone. Couples the redox reaction to proton translocation (for every two electrons transferred, four hydrogen ions are translocated across the cytoplasmic membrane), and thus conserves the redox energy in a proton gradient. This subunit may bind ubiquinone. This chain is NADH-quinone oxidoreductase subunit H, found in Paracoccus denitrificans (strain Pd 1222).